Reading from the N-terminus, the 464-residue chain is Probable acid phosphatase DDB_G0284753 (464 aa).

A disordered region spans residues 1–29; sequence MFSYFRKSQQKVEENQNGGGGDGRGSGIK. A compositionally biased stretch (gly residues) spans 17–26; that stretch reads NGGGGDGRGS. Histidine 81 (nucleophile) is an active-site residue. The segment at 180–202 is disordered; that stretch reads SFTDEQEKSPHHSSFLVKPDNEE. The Proton donor role is filled by aspartate 347.

The protein belongs to the histidine acid phosphatase family.

The catalysed reaction is a phosphate monoester + H2O = an alcohol + phosphate. In Dictyostelium discoideum (Social amoeba), this protein is Probable acid phosphatase DDB_G0284753.